The primary structure comprises 507 residues: MLSLFLKSLFAIIIIELTIIHALPTYTVHWKCSIQQANTSSASSNQTVQPRQHAAPSSDRIKSLPEFKGSLPELYSGYLEANSDKSLFYTYAPAVVDSETFIVWLQGGPGCAGTLGFFSENGPIEISQSSPSPSLNPESWTNFANMLWLDQPFGTGYSQGQAAYTTTIEEASSDFVNALKSFYQKFPHLMKKKLYLVGESYGSIWSANFAEALLSEPSLNINFMGVGIVSGLTADYETQEQITASIWVEHISKLGYYFNNTSSTISEEFKKRNKECQYDSVLNRLTFPTEQYPIWRPEYNFSTSTSLRKREALDGEDIGNVFNSISGCDLYSLSNFLLYLENSCVITYDVSLDCSFNEYNDPLITYLNREDVRSSLHATKASTALTSGEGVFADGCNFDLYKKIVSNNVESVLVEIIPRLTEKYKVSFLAGALDLQILWTGTLLALQNTTWNGWQGFTQSPGSLETTNGFTLDERNLAFTLSNSVGHMAPSKDPQMVREWLENTLLY.

The signal sequence occupies residues M1–A22. N-linked (GlcNAc...) asparagine glycosylation is found at N38 and N45. The interval S41–L64 is disordered. The active site involves S200. N-linked (GlcNAc...) asparagine glycosylation is found at N259, N260, and N300. The active site involves D434. An N-linked (GlcNAc...) asparagine glycan is attached at N448. H487 is a catalytic residue.

The protein belongs to the peptidase S10 family.

The protein localises to the secreted. Involved in degradation or processing of the mating pheromones. Its loss causes a persistent response to the pheromones. It may be required for stabilization of enzymes that are essential for zygote formation. May degrade the mating pheromone P-factor. The chain is Carboxypeptidase sxa2 (sxa2) from Schizosaccharomyces pombe (strain 972 / ATCC 24843) (Fission yeast).